A 623-amino-acid polypeptide reads, in one-letter code: E3 ubiquitin-protein ligase ORTHRUS 5 (623 aa).

Residues 12–62 (DGVCMRCQVNPPSEETLTCGTCVTPWHVSCLLPESLASSTGDWECPDCSGV) form a PHD-type zinc finger. The segment at 129–169 (CSICIQLPERPVTTPCGHNFCLKCFEKWAVGQGKLTCMICR) adopts an RING-type 1 zinc-finger fold. The region spanning 258–407 (TRNQGVLVGE…HKMCRYLFVR (150 aa)) is the YDG domain. An RING-type 2 zinc finger spans residues 498–555 (CQICRKVLSLPVTTPCAHNFCKACLEAKFAGITQLRDRSNGVRKLRAKKNIMTCPCCT). A disordered region spans residues 580-623 (KSEEEAEVAESSNISEEEGEEESEPPTKKIKMDKNSVGGTSLSA). The segment covering 594–603 (SEEEGEEESE) has biased composition (acidic residues). Basic and acidic residues predominate over residues 604–613 (PPTKKIKMDK).

In terms of tissue distribution, expressed in inflorescences.

Its subcellular location is the nucleus. It catalyses the reaction S-ubiquitinyl-[E2 ubiquitin-conjugating enzyme]-L-cysteine + [acceptor protein]-L-lysine = [E2 ubiquitin-conjugating enzyme]-L-cysteine + N(6)-ubiquitinyl-[acceptor protein]-L-lysine.. It functions in the pathway protein modification; protein ubiquitination. E3 ubiquitin-protein ligase. Participates in CpG methylation-dependent transcriptional regulation and epigenetic transcriptional silencing. Mediates ubiquitination with the E2 ubiquitin-conjugating enzyme UBC11. This chain is E3 ubiquitin-protein ligase ORTHRUS 5 (ORTH5), found in Arabidopsis thaliana (Mouse-ear cress).